Here is an 833-residue protein sequence, read N- to C-terminus: Leucine--tRNA ligase (833 aa).

The short motif at Pro-41–His-52 is the 'HIGH' region element. The 'KMSKS' region motif lies at Lys-610 to Ser-614. Lys-613 lines the ATP pocket.

It belongs to the class-I aminoacyl-tRNA synthetase family.

It is found in the cytoplasm. The catalysed reaction is tRNA(Leu) + L-leucine + ATP = L-leucyl-tRNA(Leu) + AMP + diphosphate. The polypeptide is Leucine--tRNA ligase (Streptococcus suis (strain 05ZYH33)).